The primary structure comprises 169 residues: Cell division inhibitor SulA (169 aa).

Residues A106–Y112 are ftsZ binding. The lon protease binding stretch occupies residues K162 to H169.

Belongs to the SulA family. In terms of assembly, interacts with FtsZ. Is rapidly cleaved and degraded by the Lon protease once DNA damage is repaired.

Functionally, component of the SOS system and an inhibitor of cell division. Accumulation of SulA causes rapid cessation of cell division and the appearance of long, non-septate filaments. In the presence of GTP, binds a polymerization-competent form of FtsZ in a 1:1 ratio, thus inhibiting FtsZ polymerization and therefore preventing it from participating in the assembly of the Z ring. This mechanism prevents the premature segregation of damaged DNA to daughter cells during cell division. This chain is Cell division inhibitor SulA, found in Salmonella agona (strain SL483).